The following is a 105-amino-acid chain: Small ribosomal subunit protein uS10 (105 aa).

Belongs to the universal ribosomal protein uS10 family. As to quaternary structure, part of the 30S ribosomal subunit.

Functionally, involved in the binding of tRNA to the ribosomes. The protein is Small ribosomal subunit protein uS10 of Anaplasma phagocytophilum (strain HZ).